A 355-amino-acid chain; its full sequence is 3-isopropylmalate dehydrogenase (355 aa).

Substrate is bound by residues R90, R100, R128, and D222. Mg(2+) contacts are provided by D222, D246, and D250. 280 to 292 (GSAPDIAGKGVAN) contacts NAD(+).

This sequence belongs to the isocitrate and isopropylmalate dehydrogenases family. LeuB type 1 subfamily. Homodimer. Requires Mg(2+) as cofactor. It depends on Mn(2+) as a cofactor.

The protein resides in the cytoplasm. The enzyme catalyses (2R,3S)-3-isopropylmalate + NAD(+) = 4-methyl-2-oxopentanoate + CO2 + NADH. Its pathway is amino-acid biosynthesis; L-leucine biosynthesis; L-leucine from 3-methyl-2-oxobutanoate: step 3/4. Its function is as follows. Catalyzes the oxidation of 3-carboxy-2-hydroxy-4-methylpentanoate (3-isopropylmalate) to 3-carboxy-4-methyl-2-oxopentanoate. The product decarboxylates to 4-methyl-2 oxopentanoate. In Cupriavidus pinatubonensis (strain JMP 134 / LMG 1197) (Cupriavidus necator (strain JMP 134)), this protein is 3-isopropylmalate dehydrogenase.